The chain runs to 367 residues: DNA replication and repair protein RecF (367 aa).

30–37 (GANGSGKT) contacts ATP.

Belongs to the RecF family.

Its subcellular location is the cytoplasm. Its function is as follows. The RecF protein is involved in DNA metabolism; it is required for DNA replication and normal SOS inducibility. RecF binds preferentially to single-stranded, linear DNA. It also seems to bind ATP. This chain is DNA replication and repair protein RecF, found in Pseudomonas savastanoi pv. phaseolicola (strain 1448A / Race 6) (Pseudomonas syringae pv. phaseolicola (strain 1448A / Race 6)).